The sequence spans 398 residues: Tryptophan synthase beta chain (398 aa).

Lys87 bears the N6-(pyridoxal phosphate)lysine mark.

Belongs to the TrpB family. In terms of assembly, tetramer of two alpha and two beta chains. Requires pyridoxal 5'-phosphate as cofactor.

It carries out the reaction (1S,2R)-1-C-(indol-3-yl)glycerol 3-phosphate + L-serine = D-glyceraldehyde 3-phosphate + L-tryptophan + H2O. It functions in the pathway amino-acid biosynthesis; L-tryptophan biosynthesis; L-tryptophan from chorismate: step 5/5. Its function is as follows. The beta subunit is responsible for the synthesis of L-tryptophan from indole and L-serine. The polypeptide is Tryptophan synthase beta chain (Blochmanniella floridana).